A 766-amino-acid polypeptide reads, in one-letter code: Protein phosphatase eya (766 aa).

The segment covering 22–40 (EPKVKRPKTDHTDTHERNR) has biased composition (basic and acidic residues). Disordered regions lie at residues 22–131 (EPKV…IGSL), 200–223 (DGTGSSAAVKSESRSPGQVHASLD), 365–419 (VSSP…TGSG), and 437–489 (SSGG…SEAV). Over residues 45–76 (SQQQQQQQPQQQQTHQQQQQQQQQSHQQSHSS) the composition is skewed to low complexity. Residues 89–110 (AGMGVGVGGGGGSGGGVGGGVG) are compositionally biased toward gly residues. Over residues 365–384 (VSSPSSSASHGHGFHVAASS) the composition is skewed to low complexity. Composition is skewed to polar residues over residues 385–401 (NLSESPTDTHSTTPVHQ) and 472–486 (QPSPTRSTASDTGNS). The active-site Nucleophile is D499. Residues D499, D501, and D730 each contribute to the Mg(2+) site. D501 functions as the Proton donor in the catalytic mechanism.

The protein belongs to the HAD-like hydrolase superfamily. EYA family. Interacts with Dac and So. It depends on Mg(2+) as a cofactor.

It is found in the nucleus. The enzyme catalyses O-phospho-L-tyrosyl-[protein] + H2O = L-tyrosyl-[protein] + phosphate. Functionally, tyrosine phosphatase thought to play a role in transcription regulation during organogenesis through its intrinsic protein phosphatase activity. The phosphatase activity was shown in vitro. Appears to function together with So and Dac in eye development. Required for the survival of eye progenitor cells at a critical stage in morphogenesis. This chain is Protein phosphatase eya (eya), found in Drosophila melanogaster (Fruit fly).